A 214-amino-acid polypeptide reads, in one-letter code: Attacin (214 aa).

The first 19 residues, 1 to 19 (MSKSVALLLLCACLASGRH), serve as a signal peptide directing secretion. Residues 20-26 (VPTRARR) constitute a propeptide that is removed on maturation.

The protein belongs to the attacin/sarcotoxin-2 family. Highest expression in fat body and hemocytes and to a much lesser extent in Malpighian tubules, silk gland and midgut.

It localises to the secreted. Functionally, hemolymph antibacterial protein. Has a wide spectrum of activity against both Gram-positive and Gram-negative bacteria. The protein is Attacin of Bombyx mori (Silk moth).